A 2201-amino-acid polypeptide reads, in one-letter code: Voltage-dependent T-type calcium channel subunit alpha-1I (2201 aa).

Positions 1–45 (MADSNLPPSSAAAPAPEPGITEQPGPRSPPPSPPGLEEPLEGTNP) are disordered. The Cytoplasmic segment spans residues 1-76 (MADSNLPPSS…RNWCIKMVCN (76 aa)). Residues 26-36 (PRSPPPSPPGL) are compositionally biased toward pro residues. One copy of the I repeat lies at 64–399 (TSPRNWCIKM…LCLVVIATQF (336 aa)). Residues 77–97 (PWFECVSMLVILLNCVTLGMY) traverse the membrane as a helical segment. The Extracellular portion of the chain corresponds to 98–115 (QPCDDMECLSDRCKILQV). The chain crosses the membrane as a helical span at residues 116 to 137 (FDDFIFIFFAMEMVLKMVALGI). The Cytoplasmic segment spans residues 138-146 (FGKKCYLGD). A helical membrane pass occupies residues 147-166 (TWNRLDFFIVMAGMVEYSLD). Residues 167 to 171 (LQNIN) lie on the Extracellular side of the membrane. A glycan (N-linked (GlcNAc...) asparagine) is linked at asparagine 171. A helical membrane pass occupies residues 172 to 189 (LSAIRTVRVLRPLKAINR). The Cytoplasmic portion of the chain corresponds to 190–209 (VPSMRILVNLLLDTLPMLGN). A helical transmembrane segment spans residues 210–230 (VLLLCFFVFFIFGIIGVQLWA). Residues 231-371 (GLLRNRCFLE…YYVMDAHSFY (141 aa)) lie on the Extracellular side of the membrane. Residues asparagine 242 and asparagine 309 are each glycosylated (N-linked (GlcNAc...) asparagine). The chain crosses the membrane as a helical span at residues 372–396 (NFIYFILLIIVGSFFMINLCLVVIA). Residues 397-598 (TQFSETKQRE…EKLRGIVDSK (202 aa)) are Cytoplasmic-facing. 2 disordered regions span residues 463-500 (QAMGPGTPAPAKPGPHAKEPSHCKLCPRHSPLDPTPHT) and 513-579 (PSSC…AARL). Low complexity predominate over residues 545 to 554 (SAEAEANGDG). An II repeat occupies 584–823 (WRETREKLRG…LLVAILVEGF (240 aa)). Residues 599-619 (YFNRGIMMAILVNTVSMGIEH) form a helical membrane-spanning segment. At 620–632 (HEQPEELTNILEI) the chain is on the extracellular side. The chain crosses the membrane as a helical span at residues 633 to 654 (CNVVFTSMFALEMILKLAAFGL). Over 655–660 (FDYLRN) the chain is Cytoplasmic. A helical membrane pass occupies residues 661–679 (PYNIFDSIIVIISIWEIVG). The Extracellular segment spans residues 680–687 (QADGGLSV). The chain crosses the membrane as a helical span at residues 688–711 (LRTFRLLRVLKLVRFMPALRRQLV). The Cytoplasmic portion of the chain corresponds to 712 to 722 (VLMKTMDNVAT). Residues 723-743 (FCMLLMLFIFIFSILGMHIFG) traverse the membrane as a helical segment. At 744–795 (CKFSLRTDTGDTVPDRKNFDSLLWAIVTVFQILTQEDWNVVLYNGMASTTPW) the chain is on the extracellular side. The chain crosses the membrane as a helical span at residues 796–820 (ASLYFVALMTFGNYVLFNLLVAILV). The Cytoplasmic portion of the chain corresponds to 821 to 1125 (EGFQAEGDAN…NKFRILCQTI (305 aa)). A disordered region spans residues 936-969 (WGRSGTWASRRSSWNSLKHKPPSAEHESLLSGEG). The span at 941–951 (TWASRRSSWNS) shows a compositional bias: polar residues. Position 1017 is a phosphoserine (serine 1017). Residues 1116 to 1393 (NKFRILCQTI…MFVGVVVENF (278 aa)) form an III repeat. The helical transmembrane segment at 1126–1148 (IAHKLFDYVVLAFIFLNCITIAL) threads the bilayer. Over 1149–1166 (ERPQIEAGSTERIFLTVS) the chain is Extracellular. Residues 1167 to 1187 (NYIFTAIFVGEMTLKVVSLGL) form a helical membrane-spanning segment. The Cytoplasmic segment spans residues 1188–1197 (YFGEQAYLRS). Residues 1198–1217 (SWNVLDGFLVFVSIIDIVVS) form a helical membrane-spanning segment. The Extracellular segment spans residues 1218–1231 (VASAGGAKILGVLR). Residues 1232 to 1253 (VLRLLRTLRPLRVISRAPGLKL) form a helical membrane-spanning segment. The Cytoplasmic segment spans residues 1254-1263 (VVETLISSLK). A helical transmembrane segment spans residues 1264–1287 (PIGNIVLICCAFFIIFGILGVQLF). Over 1288–1364 (KGKFYHCLGV…DQQPVTNHNP (77 aa)) the chain is Extracellular. Residues asparagine 1301 and asparagine 1304 are each glycosylated (N-linked (GlcNAc...) asparagine). Residues 1365–1390 (WMLLYFISFLLIVSFFVLNMFVGVVV) traverse the membrane as a helical segment. Over 1391–1445 (ENFHKCRQHQEAEEARRREEKRLRRLEKKRRKAQRLPYYATYCPTRLLIHSMCTS) the chain is Cytoplasmic. Residues 1431 to 1692 (TYCPTRLLIH…VVVAVLMKHL (262 aa)) form an IV repeat. The chain crosses the membrane as a helical span at residues 1446 to 1466 (HYLDIFITFIICLNVVTMSLE). Topologically, residues 1467–1480 (HYNQPTSLETALKY) are extracellular. The helical transmembrane segment at 1481-1502 (CNYMFTTVFVLEAVLKLVAFGL) threads the bilayer. Topologically, residues 1503 to 1509 (RRFFKDR) are cytoplasmic. The chain crosses the membrane as a helical span at residues 1510 to 1528 (WNQLDLAIVLLSVMGITLE). At 1529–1542 (EIEINAALPINPTI) the chain is on the extracellular side. The chain crosses the membrane as a helical span at residues 1543-1566 (IRIMRVLRIARVLKLLKMATGMRA). Residues 1567–1580 (LLDTVVQALPQVGN) lie on the Cytoplasmic side of the membrane. Residues 1581–1601 (LGLLFMLLFFIYAALGVELFG) form a helical membrane-spanning segment. The Extracellular portion of the chain corresponds to 1602–1664 (KLVCNDENPC…RSCLSSLQFV (63 aa)). Residues 1665–1692 (SPLYFVSFVLTAQFVLINVVVAVLMKHL) traverse the membrane as a helical segment. The Cytoplasmic portion of the chain corresponds to 1693 to 1835 (DDSNKEAQED…EVQLAETEAF (143 aa)). Disordered regions lie at residues 1846 to 1876 (LLGDDLSLEDPTACPPGRKDSKGELDPPEPM), 1916 to 1938 (LKHDSSQAPPSPFSPDGSSPLLQ), 1992 to 2045 (SDTS…TRRR), 2057 to 2105 (RGLR…HSET), and 2126 to 2201 (LTPA…KRKR). Residues 1992 to 2007 (SDTSLDASPSSSAGSL) show a composition bias toward low complexity. Polar residues-rich tracts occupy residues 2008–2019 (QTTLEDSLTLSD) and 2066–2075 (HSSGGSTSPG). Residues 2077–2090 (THHDSMDPSDEEGR) show a composition bias toward basic and acidic residues.

This sequence belongs to the calcium channel alpha-1 subunit (TC 1.A.1.11) family. CACNA1I subfamily. As to quaternary structure, interacts with CATSPER1 and CATSPER2, leading to suppress T-type calcium channel activity. Post-translationally, in response to raising of intracellular calcium, the T-type channels are activated by CaM-kinase II. Brain.

It is found in the membrane. The enzyme catalyses Ca(2+)(in) = Ca(2+)(out). Its function is as follows. Voltage-sensitive calcium channels (VSCC) mediate the entry of calcium ions into excitable cells and are also involved in a variety of calcium-dependent processes, including muscle contraction, hormone or neurotransmitter release, gene expression, cell motility, cell division and cell death. This channel gives rise to T-type calcium currents. T-type calcium channels belong to the 'low-voltage activated (LVA)' group and are strongly blocked by nickel and mibefradil. A particularity of this type of channels is an opening at quite negative potentials, and a voltage-dependent inactivation. T-type channels serve pacemaking functions in both central neurons and cardiac nodal cells and support calcium signaling in secretory cells and vascular smooth muscle. They may also be involved in the modulation of firing patterns of neurons which is important for information processing as well as in cell growth processes. Gates in voltage ranges similar to, but higher than alpha 1G or alpha 1H. In terms of biological role, voltage-sensitive calcium channels (VSCC) mediate the entry of calcium ions into excitable cells and are also involved in a variety of calcium-dependent processes, including muscle contraction, hormone or neurotransmitter release, gene expression, cell motility, cell division and cell death. This channel gives rise to T-type calcium currents. The sequence is that of Voltage-dependent T-type calcium channel subunit alpha-1I (Cacna1i) from Rattus norvegicus (Rat).